We begin with the raw amino-acid sequence, 316 residues long: Neuroguidin-B (316 aa).

Disordered stretches follow at residues 124–169 (ENDP…SKVK) and 292–316 (VPFM…RRRH). The span at 145–156 (DERESDSGEEGA) shows a compositional bias: acidic residues. The segment covering 296 to 316 (KKSKKGPKKSKKKKGFSRRRH) has biased composition (basic residues).

Belongs to the SAS10 family. In terms of assembly, part of the small subunit (SSU) processome, composed of more than 70 proteins and the RNA chaperone small nucleolar RNA (snoRNA) U3.

The protein resides in the nucleus. The protein localises to the nucleolus. It localises to the chromosome. It is found in the centromere. Its subcellular location is the cytoplasm. The protein resides in the cell projection. The protein localises to the axon. It localises to the dendrite. It is found in the filopodium. Functionally, part of the small subunit (SSU) processome, first precursor of the small eukaryotic ribosomal subunit. During the assembly of the SSU processome in the nucleolus, many ribosome biogenesis factors, an RNA chaperone and ribosomal proteins associate with the nascent pre-rRNA and work in concert to generate RNA folding, modifications, rearrangements and cleavage as well as targeted degradation of pre-ribosomal RNA by the RNA exosome. Its dissociation from the complex determines the transition from state pre-A1 to state pre-A1*. May inhibit mRNA translation. The sequence is that of Neuroguidin-B (ngdn-b) from Xenopus laevis (African clawed frog).